Reading from the N-terminus, the 145-residue chain is Natriuretic peptides A (145 aa).

The signal sequence occupies residues 1 to 23 (MGTSFVGYLTFVLLLLALTKVRG). A propeptide spanning residues 24-117 (GPAYNSPLSS…KLRELLNAPR (94 aa)) is cleaved from the precursor. Residues cysteine 125 and cysteine 141 are joined by a disulfide bond.

Belongs to the natriuretic peptide family. Cleaved upon secretion to produce the functional hormone.

It is found in the secreted. Hormone playing a key role in cardiovascular homeostasis through regulation of natriuresis, diuresis, and vasodilation. Has a cGMP-stimulating activity. This Aquarana catesbeiana (American bullfrog) protein is Natriuretic peptides A.